We begin with the raw amino-acid sequence, 269 residues long: Shikimate dehydrogenase (NADP(+)) (269 aa).

Shikimate contacts are provided by residues 17–19 (SKS) and Thr-64. Lys-68 (proton acceptor) is an active-site residue. Asp-80 contributes to the NADP(+) binding site. Shikimate is bound by residues Asn-89 and Asp-105. NADP(+) is bound by residues 130 to 134 (GAGGA), 154 to 159 (NRTRAK), and Met-213. Shikimate is bound at residue Tyr-215. Position 237 (Gly-237) interacts with NADP(+).

The protein belongs to the shikimate dehydrogenase family. As to quaternary structure, homodimer.

The catalysed reaction is shikimate + NADP(+) = 3-dehydroshikimate + NADPH + H(+). It participates in metabolic intermediate biosynthesis; chorismate biosynthesis; chorismate from D-erythrose 4-phosphate and phosphoenolpyruvate: step 4/7. Its function is as follows. Involved in the biosynthesis of the chorismate, which leads to the biosynthesis of aromatic amino acids. Catalyzes the reversible NADPH linked reduction of 3-dehydroshikimate (DHSA) to yield shikimate (SA). This chain is Shikimate dehydrogenase (NADP(+)), found in Neisseria meningitidis serogroup C (strain 053442).